The primary structure comprises 565 residues: Sulfite reductase [NADPH] hemoprotein beta-component (565 aa).

[4Fe-4S] cluster contacts are provided by Cys-429, Cys-435, Cys-474, and Cys-478. Residue Cys-478 participates in siroheme binding.

This sequence belongs to the nitrite and sulfite reductase 4Fe-4S domain family. As to quaternary structure, alpha(8)-beta(8). The alpha component is a flavoprotein, the beta component is a hemoprotein. It depends on siroheme as a cofactor. Requires [4Fe-4S] cluster as cofactor.

The enzyme catalyses hydrogen sulfide + 3 NADP(+) + 3 H2O = sulfite + 3 NADPH + 4 H(+). It participates in sulfur metabolism; hydrogen sulfide biosynthesis; hydrogen sulfide from sulfite (NADPH route): step 1/1. In terms of biological role, component of the sulfite reductase complex that catalyzes the 6-electron reduction of sulfite to sulfide. This is one of several activities required for the biosynthesis of L-cysteine from sulfate. This Pseudoalteromonas translucida (strain TAC 125) protein is Sulfite reductase [NADPH] hemoprotein beta-component.